The following is a 1183-amino-acid chain: DNA-directed RNA polymerase subunit beta (1183 aa).

Residues 1153-1162 show a composition bias toward acidic residues; sequence DMQDNEEEDV. Residues 1153 to 1183 are disordered; the sequence is DMQDNEEEDVVERKVDLQQKDAPQSQKEVTD. The span at 1173–1183 shows a compositional bias: polar residues; that stretch reads DAPQSQKEVTD.

The protein belongs to the RNA polymerase beta chain family. As to quaternary structure, the RNAP catalytic core consists of 2 alpha, 1 beta, 1 beta' and 1 omega subunit. When a sigma factor is associated with the core the holoenzyme is formed, which can initiate transcription.

It catalyses the reaction RNA(n) + a ribonucleoside 5'-triphosphate = RNA(n+1) + diphosphate. Functionally, DNA-dependent RNA polymerase catalyzes the transcription of DNA into RNA using the four ribonucleoside triphosphates as substrates. In Staphylococcus saprophyticus subsp. saprophyticus (strain ATCC 15305 / DSM 20229 / NCIMB 8711 / NCTC 7292 / S-41), this protein is DNA-directed RNA polymerase subunit beta.